We begin with the raw amino-acid sequence, 834 residues long: RNA-binding protein 12B-B (834 aa).

The RRM 1 domain maps to 154–229 (PYLFLRGLPY…RFIEVMQGSE (76 aa)). The interval 237–277 (GTATEGGDTPRMRSEEHSPSRRINGRHFRKRSHSKSPRARS) is disordered. Positions 244–255 (DTPRMRSEEHSP) are enriched in basic and acidic residues. Basic residues predominate over residues 259–277 (INGRHFRKRSHSKSPRARS). 2 RRM domains span residues 283-359 (FYVH…PVSR) and 401-478 (LCIY…LISE). 2 disordered regions span residues 546-572 (GYFRQSDRCSPEDFRHSPEDYRHPWEE) and 621-643 (HFRRSYQEHIRRPPQEHFRRSRE). The segment covering 550–572 (QSDRCSPEDFRHSPEDYRHPWEE) has biased composition (basic and acidic residues). S701 is modified (phosphoserine). One can recognise an RRM 4 domain in the interval 758–834 (IRVMISNLPF…GPRKVKLSLL (77 aa)).

This Mus musculus (Mouse) protein is RNA-binding protein 12B-B (Rbm12b2).